The primary structure comprises 1044 residues: Elongation factor 3A (1044 aa).

Ser2 carries the N-acetylserine modification. The HEAT 1 repeat unit spans residues 5-42 (QQSIKVLEELFQKLSVATADNRHEIASEVASFLNGNII). The ADP site is built by Ile42, His44, and Ser83. 6 HEAT repeats span residues 86-123 (PYIV…AVNP), 125-162 (AIKA…AAKD), 166-203 (LRMP…TVDN), 205-241 (DIER…EVTP), 242-279 (ATLS…LVED), and 285-323 (PFLG…VGNV). N6,N6,N6-trimethyllysine is present on residues Lys187 and Lys196. Lys350 participates in a covalent cross-link: Glycyl lysine isopeptide (Lys-Gly) (interchain with G-Cter in ubiquitin). Residues Thr392, His396, and Glu397 each contribute to the ADP site. Residues 426-641 (DEGEDLCNCE…CPAAKAYEEL (216 aa)) form the ABC transporter 1 domain. Residue Lys636 forms a Glycyl lysine isopeptide (Lys-Gly) (interchain with G-Cter in ubiquitin) linkage. Ser642 bears the Phosphoserine mark. One can recognise an ABC transporter 2 domain in the interval 667-993 (VKVTNMEFQY…AGPRIEKKED (327 aa)). Residue Asn703 coordinates ADP. N6,N6,N6-trimethyllysine is present on Lys789. Glu922, Asn925, and His951 together coordinate ADP. At Thr972 the chain carries Phosphothreonine. Ser974 bears the Phosphoserine mark. A disordered region spans residues 974 to 1044 (SGHNWVSGQG…DAYVSSDEEF (71 aa)). Over residues 1007–1031 (GGKKKKKLSSAELRKKKKERMKKKK) the composition is skewed to basic residues. 2 positions are modified to phosphoserine: Ser1039 and Ser1040.

The protein belongs to the ABC transporter superfamily. ABCF family. EF3 subfamily. As to quaternary structure, monomer. Interacts with elongation factor 1A (eEF1A). Interacts through its N-terminus with 18S rRNA. Associates with ribosomes; preferentially binds ribosomes in the post-translocational state (bearing a peptidyl-tRNA in the P-site) in the presence of ATP, suggesting that ATP hydrolysis is required for ribosome dissociation.

The protein localises to the cytoplasm. Its subcellular location is the cytosol. It carries out the reaction ATP + H2O = ADP + phosphate + H(+). Its pathway is protein biosynthesis; polypeptide chain elongation. Its activity is regulated as follows. Inhibited by the translational inhibitors neomycin and alpha-sarcin, which suppress the ATPase activity. Ribosome-dependent ATPase that functions in cytoplasmic translation elongation. Required for the ATP-dependent release of deacylated tRNA from the ribosomal E-site during protein biosynthesis. Stimulates the eEF1A-dependent binding of aminoacyl-tRNA to the ribosomal A-site, which has reduced affinity for tRNA as long as the E-site is occupied. Assists translation termination by stimulating the release of nascent protein from the ribosome by release factors. In nutrient-replete conditions, occupies the space on the ribosome bound by GCN1 during amino acid starvation conditions, and therefore indirectly negatively regulates GCN2 kinase activity in replete conditions. This is Elongation factor 3A (YEF3) from Saccharomyces cerevisiae (strain ATCC 204508 / S288c) (Baker's yeast).